The chain runs to 933 residues: 2-oxoglutarate dehydrogenase E1 component (933 aa).

It belongs to the alpha-ketoglutarate dehydrogenase family. In terms of assembly, homodimer. Part of the 2-oxoglutarate dehydrogenase (OGDH) complex composed of E1 (2-oxoglutarate dehydrogenase), E2 (dihydrolipoamide succinyltransferase) and E3 (dihydrolipoamide dehydrogenase); the complex contains multiple copies of the three enzymatic components (E1, E2 and E3). The cofactor is thiamine diphosphate.

The catalysed reaction is N(6)-[(R)-lipoyl]-L-lysyl-[protein] + 2-oxoglutarate + H(+) = N(6)-[(R)-S(8)-succinyldihydrolipoyl]-L-lysyl-[protein] + CO2. Functionally, E1 component of the 2-oxoglutarate dehydrogenase (OGDH) complex which catalyzes the decarboxylation of 2-oxoglutarate, the first step in the conversion of 2-oxoglutarate to succinyl-CoA and CO(2). The chain is 2-oxoglutarate dehydrogenase E1 component (sucA) from Rickettsia typhi (strain ATCC VR-144 / Wilmington).